Consider the following 341-residue polypeptide: ATP-dependent 6-phosphofructokinase 2 (341 aa).

ATP-binding positions include Gly10, 72-73, and 102-105; these read RL and GEGT. Glu103 is a Mg(2+) binding site. Substrate is bound by residues 125 to 127, Arg162, 169 to 171, Glu222, Lys266, and 272 to 275; these read TID, MGR, and HVQR. Residue Asp127 is the Proton acceptor of the active site.

This sequence belongs to the phosphofructokinase type A (PFKA) family. Mixed-substrate PFK group III subfamily. As to quaternary structure, homodimer or homotetramer. The cofactor is Mg(2+).

It is found in the cytoplasm. The catalysed reaction is beta-D-fructose 6-phosphate + ATP = beta-D-fructose 1,6-bisphosphate + ADP + H(+). The protein operates within carbohydrate degradation; glycolysis; D-glyceraldehyde 3-phosphate and glycerone phosphate from D-glucose: step 3/4. Its activity is regulated as follows. Allosterically inhibited by phosphoenolpyruvate. In terms of biological role, catalyzes the phosphorylation of D-fructose 6-phosphate to fructose 1,6-bisphosphate by ATP, the first committing step of glycolysis. In Streptomyces coelicolor (strain ATCC BAA-471 / A3(2) / M145), this protein is ATP-dependent 6-phosphofructokinase 2.